A 266-amino-acid chain; its full sequence is Apolipoprotein A-I (266 aa).

Positions 1 to 18 (MKAVVLTLAVLFLTGSQA) are cleaved as a signal peptide. Repeat copies occupy residues 67 to 88 (LKLLDNWDSLSSTVAKLREQIG) and 89 to 110 (PVTQEFWDNLEKETEVLRQEMS). The 10 X approximate tandem repeats stretch occupies residues 67–266 (LKLLDNWDSL…DEATKKLNSQ (200 aa)). Methionine 109 carries the post-translational modification Methionine sulfoxide. A 3; half-length repeat occupies 111 to 121 (KDLEEVKKKVQ). Tandem repeats lie at residues 122–143 (PYLDEFQSKWHEEVELYRQKVA), 144–165 (PLGAELREGARQKLQELQEKLS), 166–187 (PLAEELRDRARAHVDALRAQLA), 188–209 (PYSEQLRERLAARLQALKEGGG), and 210–231 (AALTEYHAKASEHLSALREKAK). The stretch at 232 to 242 (PALEDLRQGLL) is one 9; half-length repeat. Residues 243–266 (PVLENFRVSLLAAVDEATKKLNSQ) form repeat 10.

The protein belongs to the apolipoprotein A1/A4/E family. Homodimer. Interacts with APOA1BP and CLU. Component of a sperm activating protein complex (SPAP), consisting of APOA1, an immunoglobulin heavy chain, an immunoglobulin light chain and albumin. Interacts with NDRG1. Interacts with SCGB3A2. Interacts with NAXE and YJEFN3. In terms of processing, glycosylated. Post-translationally, palmitoylated. Phosphorylation sites are present in the extracellular medium.

It is found in the secreted. Functionally, participates in the reverse transport of cholesterol from tissues to the liver for excretion by promoting cholesterol efflux from tissues and by acting as a cofactor for the lecithin cholesterol acyltransferase (LCAT). As part of the SPAP complex, activates spermatozoa motility. This chain is Apolipoprotein A-I (APOA1), found in Mirounga angustirostris (Northern elephant seal).